A 252-amino-acid chain; its full sequence is Protein HEAT-INDUCED TAS1 TARGET 2 (252 aa).

This sequence belongs to the heat induced plant HTT protein family. As to expression, expressed ubiquitously, including in seedlings, leaves, stems, inflorescences and siliques.

The protein resides in the cytoplasm. The protein localises to the nucleus. Its function is as follows. Mediates both basal and acquired thermotolerance via HSFA1s-directed pathways (e.g. HSFA1A, HSFA1B, and HSFA1D). Triggers the expression of HSFA1A and HSFA1B. The polypeptide is Protein HEAT-INDUCED TAS1 TARGET 2 (Arabidopsis thaliana (Mouse-ear cress)).